The sequence spans 375 residues: Putative F-box protein At5g52620 (375 aa).

In terms of domain architecture, F-box spans 5–52 (GKSDPIPIDIILDILSRLSTNSIAKFGLASKFCGSILRGQDFIELFLI).

This is Putative F-box protein At5g52620 from Arabidopsis thaliana (Mouse-ear cress).